Here is a 419-residue protein sequence, read N- to C-terminus: Altered inheritance of mitochondria protein 6 (419 aa).

The N-terminal stretch at 1 to 31 (MLPPFIVAGLFSSYILIMGLMFSQISHVSNS) is a signal peptide.

The protein belongs to the AIM6 family.

This is Altered inheritance of mitochondria protein 6 (AIM6) from Kluyveromyces lactis (strain ATCC 8585 / CBS 2359 / DSM 70799 / NBRC 1267 / NRRL Y-1140 / WM37) (Yeast).